The chain runs to 1324 residues: Structural maintenance of chromosomes protein 4 (1324 aa).

A disordered region spans residues 1-24 (MSDKGIFRTSSTPSIVDVTPDRGE). Phosphothreonine; by CDC2 is present on T19. 155–162 (GPNGSGKS) provides a ligand contact to ATP. 2 coiled-coil regions span residues 310–337 (QELSNSDDICAEKESRLKLVLSEKAKLE) and 370–628 (NKKT…KASL). The SMC hinge domain maps to 651–764 (NGFFGRLGDL…KNLEQANRIA (114 aa)). Coiled coils occupy residues 825 to 1077 (YRQH…MSNL) and 1297 to 1324 (LSSRLVGIYKTANMTKSVTINNKEILTD).

This sequence belongs to the SMC family. SMC4 subfamily. In terms of assembly, forms a heterodimer with cut14/smc2. Component of the condensin complex, which contains the smc2 and smc4 heterodimer, and three non smc subunits that probably regulate the complex: cnd1, cnd2 and cnd3. Interacts with C1739.07. In terms of processing, phosphorylated by CDC2 on Thr-19 at metaphase.

Its subcellular location is the nucleus. The protein localises to the cytoplasm. It is found in the chromosome. Its function is as follows. Central component of the condensin complex, a complex required for conversion of interphase chromatin into mitotic-like condense chromosomes. The condensin complex probably introduces positive supercoils into relaxed DNA in the presence of type I topoisomerases and converts nicked DNA into positive knotted forms in the presence of type II topoisomerases. The polypeptide is Structural maintenance of chromosomes protein 4 (cut3) (Schizosaccharomyces pombe (strain 972 / ATCC 24843) (Fission yeast)).